Here is a 302-residue protein sequence, read N- to C-terminus: tRNA pseudouridine synthase B (302 aa).

H40 serves as a coordination point for substrate. D45 serves as the catalytic Nucleophile. Substrate is bound by residues Y73, Y178, and L199.

The protein belongs to the pseudouridine synthase TruB family. Type 1 subfamily.

The enzyme catalyses uridine(55) in tRNA = pseudouridine(55) in tRNA. Its function is as follows. Responsible for synthesis of pseudouridine from uracil-55 in the psi GC loop of transfer RNAs. This is tRNA pseudouridine synthase B from Buchnera aphidicola subsp. Baizongia pistaciae (strain Bp).